Here is a 344-residue protein sequence, read N- to C-terminus: Mitogen-activated protein kinase mpkC (344 aa).

Residues 19–298 (YANVQPVGLG…AETALQHPYL (280 aa)) form the Protein kinase domain. Residues 25–33 (VGLGAFGLV) and K48 each bind ATP. Residue D140 is the Proton acceptor of the active site. Residue T170 is modified to Phosphothreonine. Residues 170 to 172 (TGY) carry the TXY motif. Y172 carries the phosphotyrosine modification.

This sequence belongs to the protein kinase superfamily. Ser/Thr protein kinase family. MAP kinase subfamily. HOG1 sub-subfamily. Mg(2+) is required as a cofactor. Dually phosphorylated on Thr-170 and Tyr-172, which activates the enzyme.

The catalysed reaction is L-seryl-[protein] + ATP = O-phospho-L-seryl-[protein] + ADP + H(+). The enzyme catalyses L-threonyl-[protein] + ATP = O-phospho-L-threonyl-[protein] + ADP + H(+). With respect to regulation, activated by tyrosine and threonine phosphorylation. Functionally, mitogen-activated protein kinase required for growth on media where sorbitol or mannitol is the sole carbon source. The sequence is that of Mitogen-activated protein kinase mpkC (mpkC) from Aspergillus oryzae (strain ATCC 42149 / RIB 40) (Yellow koji mold).